Consider the following 181-residue polypeptide: Ribosome maturation factor RimM (181 aa).

The 80-residue stretch at 98–177 (EGEFFYCDLI…KITTHNAKTL (80 aa)) folds into the PRC barrel domain.

It belongs to the RimM family. As to quaternary structure, binds ribosomal protein uS19.

Its subcellular location is the cytoplasm. Its function is as follows. An accessory protein needed during the final step in the assembly of 30S ribosomal subunit, possibly for assembly of the head region. Essential for efficient processing of 16S rRNA. May be needed both before and after RbfA during the maturation of 16S rRNA. It has affinity for free ribosomal 30S subunits but not for 70S ribosomes. This Helicobacter pylori (strain J99 / ATCC 700824) (Campylobacter pylori J99) protein is Ribosome maturation factor RimM.